We begin with the raw amino-acid sequence, 205 residues long: Low-density lipoprotein receptor class A domain-containing protein 1 (205 aa).

The chain crosses the membrane as a helical span at residues 43–63 (LLLLLATVAALIALVTILGLP). The LDL-receptor class A 1 domain maps to 71 to 114 (ACITLTNRTGFLCHDQRSCIPASGVCDGVRTCTHGEDEDESLCR). Cystine bridges form between Cys-72/Cys-89, Cys-83/Cys-102, Cys-96/Cys-113, Cys-141/Cys-160, Cys-163/Cys-180, and Cys-170/Cys-193. Residues 115–161 (DVPQSLPHFLVAHCGDPASWIYSDQKCDGTNNCGDCSDELSPVTVCP) form the LDL-receptor class A 2; atypical domain. An LDL-receptor class A 3; atypical domain is found at 162–203 (PCGPGWWRCPSTFFKYCDCIPRHLCRDHVQHCSDWSDEYACP).

Belongs to the LDLR family.

Its subcellular location is the membrane. The polypeptide is Low-density lipoprotein receptor class A domain-containing protein 1 (LDLRAD1) (Homo sapiens (Human)).